The sequence spans 77 residues: MDFKRKLSEVDADAAEDVKMDMGATIIPQRERATSVIEDFLHQENSELKKSLKNLEMENEKLKNILKTDYNVNYIRK.

The stretch at 38–71 (EDFLHQENSELKKSLKNLEMENEKLKNILKTDYN) forms a coiled coil.

Plays an important role in survival in host blood through increasing tolerance to stresses such as heat, salt, or cycloheximide, which is essential for virulence. This is Blood-induced peptide 1 from Candida albicans (strain SC5314 / ATCC MYA-2876) (Yeast).